Reading from the N-terminus, the 248-residue chain is Ribonuclease 3 (248 aa).

The region spanning Leu-15–Gly-142 is the RNase III domain. Glu-55 is a Mg(2+) binding site. Residue Asp-59 is part of the active site. Positions 128 and 131 each coordinate Mg(2+). Residue Glu-131 is part of the active site. Residues Asp-169–Thr-240 form the DRBM domain.

Belongs to the ribonuclease III family. In terms of assembly, homodimer. Mg(2+) is required as a cofactor.

It localises to the cytoplasm. It carries out the reaction Endonucleolytic cleavage to 5'-phosphomonoester.. Functionally, digests double-stranded RNA. Involved in the processing of primary rRNA transcript to yield the immediate precursors to the large and small rRNAs (23S and 16S). Processes some mRNAs, and tRNAs when they are encoded in the rRNA operon. Processes pre-crRNA and tracrRNA of type II CRISPR loci if present in the organism. The sequence is that of Ribonuclease 3 from Spiroplasma citri.